The sequence spans 101 residues: Small ribosomal subunit protein uS14 (101 aa).

The segment at 48 to 69 (LSKLPRDSSPSRHRSRCELSGR) is disordered. The span at 51–68 (LPRDSSPSRHRSRCELSG) shows a compositional bias: basic and acidic residues.

The protein belongs to the universal ribosomal protein uS14 family. Part of the 30S ribosomal subunit. Contacts proteins S3 and S10.

Functionally, binds 16S rRNA, required for the assembly of 30S particles and may also be responsible for determining the conformation of the 16S rRNA at the A site. The chain is Small ribosomal subunit protein uS14 from Stenotrophomonas maltophilia (strain R551-3).